The sequence spans 657 residues: 1-deoxy-D-xylulose-5-phosphate synthase (657 aa).

Position 73 (His73) interacts with thiamine diphosphate. Positions 91–110 are disordered; sequence RQEGGMSGYPDRGESEHDIV. Basic and acidic residues predominate over residues 101–110; that stretch reads DRGESEHDIV. Residue 113–115 participates in thiamine diphosphate binding; the sequence is SHA. Asp145 contributes to the Mg(2+) binding site. Residues 146–147, Asn175, Tyr293, and Glu375 contribute to the thiamine diphosphate site; that span reads GA. A Mg(2+)-binding site is contributed by Asn175.

This sequence belongs to the transketolase family. DXPS subfamily. In terms of assembly, homodimer. The cofactor is Mg(2+). Thiamine diphosphate is required as a cofactor.

The catalysed reaction is D-glyceraldehyde 3-phosphate + pyruvate + H(+) = 1-deoxy-D-xylulose 5-phosphate + CO2. It participates in metabolic intermediate biosynthesis; 1-deoxy-D-xylulose 5-phosphate biosynthesis; 1-deoxy-D-xylulose 5-phosphate from D-glyceraldehyde 3-phosphate and pyruvate: step 1/1. Functionally, catalyzes the acyloin condensation reaction between C atoms 2 and 3 of pyruvate and glyceraldehyde 3-phosphate to yield 1-deoxy-D-xylulose-5-phosphate (DXP). In Arthrobacter sp. (strain FB24), this protein is 1-deoxy-D-xylulose-5-phosphate synthase.